The following is a 206-amino-acid chain: Large ribosomal subunit protein uL4 (206 aa).

The span at 42 to 54 shows a compositional bias: polar residues; that stretch reads RRQQGTHQSQGRS. A disordered region spans residues 42 to 94; it reads RRQQGTHQSQGRSDVSRTGAKMFKQKGTGRARHSSARAPQFRGGGKAHGPVFR. Positions 64–76 are enriched in basic residues; sequence FKQKGTGRARHSS.

It belongs to the universal ribosomal protein uL4 family. As to quaternary structure, part of the 50S ribosomal subunit.

Functionally, one of the primary rRNA binding proteins, this protein initially binds near the 5'-end of the 23S rRNA. It is important during the early stages of 50S assembly. It makes multiple contacts with different domains of the 23S rRNA in the assembled 50S subunit and ribosome. Its function is as follows. Forms part of the polypeptide exit tunnel. The chain is Large ribosomal subunit protein uL4 from Bartonella tribocorum (strain CIP 105476 / IBS 506).